We begin with the raw amino-acid sequence, 454 residues long: Asparagine--tRNA ligase (454 aa).

This sequence belongs to the class-II aminoacyl-tRNA synthetase family. As to quaternary structure, homodimer.

The protein resides in the cytoplasm. It catalyses the reaction tRNA(Asn) + L-asparagine + ATP = L-asparaginyl-tRNA(Asn) + AMP + diphosphate + H(+). This Mesoplasma florum (strain ATCC 33453 / NBRC 100688 / NCTC 11704 / L1) (Acholeplasma florum) protein is Asparagine--tRNA ligase.